The primary structure comprises 72 residues: MAKEDVIEMQGTVQDTLPNTMFRVELENGHVVTAHISGKMRKNYIRILTGDKVTVELTPYDLSKGRIVFRAR.

Residues Met1–Arg72 enclose the S1-like domain.

The protein belongs to the IF-1 family. Component of the 30S ribosomal translation pre-initiation complex which assembles on the 30S ribosome in the order IF-2 and IF-3, IF-1 and N-formylmethionyl-tRNA(fMet); mRNA recruitment can occur at any time during PIC assembly.

The protein localises to the cytoplasm. One of the essential components for the initiation of protein synthesis. Stabilizes the binding of IF-2 and IF-3 on the 30S subunit to which N-formylmethionyl-tRNA(fMet) subsequently binds. Helps modulate mRNA selection, yielding the 30S pre-initiation complex (PIC). Upon addition of the 50S ribosomal subunit IF-1, IF-2 and IF-3 are released leaving the mature 70S translation initiation complex. The sequence is that of Translation initiation factor IF-1 from Photobacterium profundum (strain SS9).